Consider the following 322-residue polypeptide: Undecaprenyl-phosphate 4-deoxy-4-formamido-L-arabinose transferase (322 aa).

Residues methionine 1–methionine 235 are Cytoplasmic-facing. Residues leucine 236 to isoleucine 256 traverse the membrane as a helical segment. Over leucine 257–glycine 269 the chain is Periplasmic. A helical membrane pass occupies residues valine 270–leucine 290. Residues leucine 291–glutamate 322 lie on the Cytoplasmic side of the membrane.

Belongs to the glycosyltransferase 2 family.

It is found in the cell inner membrane. It carries out the reaction UDP-4-deoxy-4-formamido-beta-L-arabinose + di-trans,octa-cis-undecaprenyl phosphate = 4-deoxy-4-formamido-alpha-L-arabinopyranosyl di-trans,octa-cis-undecaprenyl phosphate + UDP. The protein operates within glycolipid biosynthesis; 4-amino-4-deoxy-alpha-L-arabinose undecaprenyl phosphate biosynthesis; 4-amino-4-deoxy-alpha-L-arabinose undecaprenyl phosphate from UDP-4-deoxy-4-formamido-beta-L-arabinose and undecaprenyl phosphate: step 1/2. Its pathway is bacterial outer membrane biogenesis; lipopolysaccharide biosynthesis. Functionally, catalyzes the transfer of 4-deoxy-4-formamido-L-arabinose from UDP to undecaprenyl phosphate. The modified arabinose is attached to lipid A and is required for resistance to polymyxin and cationic antimicrobial peptides. The protein is Undecaprenyl-phosphate 4-deoxy-4-formamido-L-arabinose transferase of Shigella dysenteriae serotype 1 (strain Sd197).